The primary structure comprises 236 residues: Large ribosomal subunit protein uL3 (236 aa).

The protein belongs to the universal ribosomal protein uL3 family. As to quaternary structure, part of the 50S ribosomal subunit. Forms a cluster with proteins L14 and L19.

In terms of biological role, one of the primary rRNA binding proteins, it binds directly near the 3'-end of the 23S rRNA, where it nucleates assembly of the 50S subunit. The protein is Large ribosomal subunit protein uL3 of Anaeromyxobacter dehalogenans (strain 2CP-1 / ATCC BAA-258).